Reading from the N-terminus, the 283-residue chain is Elongation factor Ts (283 aa).

The interval 79 to 82 is involved in Mg(2+) ion dislocation from EF-Tu; the sequence is TDFV.

This sequence belongs to the EF-Ts family.

The protein resides in the cytoplasm. Functionally, associates with the EF-Tu.GDP complex and induces the exchange of GDP to GTP. It remains bound to the aminoacyl-tRNA.EF-Tu.GTP complex up to the GTP hydrolysis stage on the ribosome. The sequence is that of Elongation factor Ts from Shewanella sp. (strain ANA-3).